The chain runs to 152 residues: Transcriptional regulator MraZ (152 aa).

2 consecutive SpoVT-AbrB domains span residues 5–52 and 81–124; these read ATLV…PLPE and ASEC…DEQT.

Belongs to the MraZ family. Forms oligomers.

Its subcellular location is the cytoplasm. It is found in the nucleoid. In terms of biological role, negatively regulates its own expression and that of the subsequent genes in the proximal part of the division and cell wall (dcw) gene cluster. Acts by binding directly to DNA. May also regulate the expression of genes outside the dcw cluster. This chain is Transcriptional regulator MraZ, found in Erwinia tasmaniensis (strain DSM 17950 / CFBP 7177 / CIP 109463 / NCPPB 4357 / Et1/99).